The following is a 77-amino-acid chain: MARVCKVTGKRPMTGNNVSHANNKTKRRFLPNLQYRKFWVESENRWVRLRVSNAALRTIDKVGIDVVLADLRARGEI.

The tract at residues 1–21 (MARVCKVTGKRPMTGNNVSHA) is disordered.

The protein belongs to the bacterial ribosomal protein bL28 family.

The chain is Large ribosomal subunit protein bL28 from Chromobacterium violaceum (strain ATCC 12472 / DSM 30191 / JCM 1249 / CCUG 213 / NBRC 12614 / NCIMB 9131 / NCTC 9757 / MK).